Reading from the N-terminus, the 286-residue chain is MATFSYFQNYPHSLLDPLLFPTPHSSINLTSFIDQNHLYPLPNISTVEDISFLEYNVDKTENSGSEKLANTTKTATTGSSSCDQLSHGPSAITNTGKTRGRKARNSNNSKEGVEGRKSKKQKRGSKEEPPTDYIHVRARRGQATDSHSLAERVRREKISERMRTLQNLVPGCDKVTGKALMLDEIINYVQTLQTQVEFLSMKLTSISPVVYDFGSDLDGLILQSEMGSPEVGTSFTNAMPTTTPIFPSLLDNSVVPTHAQVQEEGEERENFVDRSGFNNNNFCSFP.

Polar residues predominate over residues 63–84; it reads SGSEKLANTTKTATTGSSSCDQ. The segment at 63-149 is disordered; the sequence is SGSEKLANTT…RGQATDSHSL (87 aa). Residues 142–192 enclose the bHLH domain; sequence QATDSHSLAERVRREKISERMRTLQNLVPGCDKVTGKALMLDEIINYVQTL.

As to quaternary structure, homodimer.

Its subcellular location is the nucleus. The protein is Transcription factor bHLH137 (BHLH137) of Arabidopsis thaliana (Mouse-ear cress).